Here is a 487-residue protein sequence, read N- to C-terminus: Glutamyl-tRNA(Gln) amidotransferase subunit A (487 aa).

Active-site charge relay system residues include Lys-79 and Ser-154. Ser-178 (acyl-ester intermediate) is an active-site residue.

Belongs to the amidase family. GatA subfamily. In terms of assembly, heterotrimer of A, B and C subunits.

The catalysed reaction is L-glutamyl-tRNA(Gln) + L-glutamine + ATP + H2O = L-glutaminyl-tRNA(Gln) + L-glutamate + ADP + phosphate + H(+). Allows the formation of correctly charged Gln-tRNA(Gln) through the transamidation of misacylated Glu-tRNA(Gln) in organisms which lack glutaminyl-tRNA synthetase. The reaction takes place in the presence of glutamine and ATP through an activated gamma-phospho-Glu-tRNA(Gln). The polypeptide is Glutamyl-tRNA(Gln) amidotransferase subunit A (Roseiflexus sp. (strain RS-1)).